The primary structure comprises 287 residues: U-megalopygitoxin(8)-Mc8 (287 aa).

A signal peptide spans 1–17 (MYLQYLVLSLFSTTVYG).

This sequence belongs to the caterpillar 8 family. Contains 2 disulfide bonds. As to expression, expressed by the venom apparatus.

The protein localises to the secreted. Probable toxin. The chain is U-megalopygitoxin(8)-Mc8 from Megalopyge crispata (Black-waved flannel moth).